Here is a 439-residue protein sequence, read N- to C-terminus: Hemagglutinin-esterase (439 aa).

The N-terminal stretch at 1-22 (MGSMCIAMAPRTLLLLIGCQLA) is a signal peptide. The segment at 12 to 132 (TLLLLIGCQL…DNKRWMGNKA (121 aa)) is esterase domain 1. Residues 23–407 (LGFNEPLNVV…PVCLYDPLPV (385 aa)) lie on the Virion surface side of the membrane. Catalysis depends on Ser-45, which acts as the Nucleophile. Residues Cys-49 and Cys-70 are joined by a disulfide bond. 5 N-linked (GlcNAc...) asparagine; by host glycosylation sites follow: Asn-94, Asn-152, Asn-196, Asn-246, and Asn-316. Cys-118 and Cys-167 are oxidised to a cystine. Residues 133–281 (RFYALVYKKM…GNYKAVSLEY (149 aa)) form a receptor binding region. Intrachain disulfides connect Cys-202-Cys-291 and Cys-210-Cys-264. Residues 282 to 395 (LLTIPSKAIC…QCPTAANIEF (114 aa)) form an esterase domain 2 region. Cys-322 and Cys-327 are disulfide-bonded. 2 N-linked (GlcNAc...) asparagine; by host glycosylation sites follow: Asn-331 and Asn-337. Residues Asp-342 and His-345 each act as charge relay system in the active site. N-linked (GlcNAc...) asparagine; by host glycans are attached at residues Asn-360 and Asn-374. Residues Cys-363 and Cys-387 are joined by a disulfide bond. The chain crosses the membrane as a helical span at residues 408–428 (ILLGVLLGIAVLIIVFLLFYF). Residues 429-439 (MTDSGVRLHEA) are Intravirion-facing.

It belongs to the influenza type C/coronaviruses hemagglutinin-esterase family. In terms of assembly, homodimer; disulfide-linked. Forms a complex with the M protein in the pre-Golgi. Associates then with S-M complex to form a ternary complex S-M-HE. Post-translationally, N-glycosylated in the host RER.

It is found in the virion membrane. Its subcellular location is the host cell membrane. It catalyses the reaction N-acetyl-9-O-acetylneuraminate + H2O = N-acetylneuraminate + acetate + H(+). The catalysed reaction is N-acetyl-4-O-acetylneuraminate + H2O = N-acetylneuraminate + acetate + H(+). Its function is as follows. Structural protein that makes short spikes at the surface of the virus. Contains receptor binding and receptor-destroying activities. Mediates de-O-acetylation of N-acetyl-4-O-acetylneuraminic acid, which is probably the receptor determinant recognized by the virus on the surface of erythrocytes and susceptible cells. This receptor-destroying activity is important for virus release as it probably helps preventing self-aggregation and ensures the efficient spread of the progeny virus from cell to cell. May serve as a secondary viral attachment protein for initiating infection, the spike protein being the major one. May become a target for both the humoral and the cellular branches of the immune system. In Puffinosis coronavirus (PV), this protein is Hemagglutinin-esterase.